A 149-amino-acid polypeptide reads, in one-letter code: Large ribosomal subunit protein bL9 (149 aa).

It belongs to the bacterial ribosomal protein bL9 family.

Binds to the 23S rRNA. The chain is Large ribosomal subunit protein bL9 from Geobacillus sp. (strain WCH70).